The primary structure comprises 201 residues: UPF0376 protein F10G2.1 (201 aa).

Over 1–3 (MKH) the chain is Cytoplasmic. Residues 4–24 (FLLLAIIGILFLGSTYGASVA) traverse the membrane as a helical; Signal-anchor for type II membrane protein segment. The Extracellular portion of the chain corresponds to 25–201 (TEKLKASNCT…LLECDFRNIQ (177 aa)). Asn-32 and Asn-124 each carry an N-linked (GlcNAc...) asparagine glycan.

Belongs to the UPF0376 family.

Its subcellular location is the membrane. The chain is UPF0376 protein F10G2.1 from Caenorhabditis elegans.